A 199-amino-acid polypeptide reads, in one-letter code: Ribonuclease P protein component 3 (199 aa).

This sequence belongs to the eukaryotic/archaeal RNase P protein component 3 family. Consists of a catalytic RNA component and at least 4-5 protein subunits.

The protein localises to the cytoplasm. The catalysed reaction is Endonucleolytic cleavage of RNA, removing 5'-extranucleotides from tRNA precursor.. In terms of biological role, part of ribonuclease P, a protein complex that generates mature tRNA molecules by cleaving their 5'-ends. This is Ribonuclease P protein component 3 from Archaeoglobus fulgidus (strain ATCC 49558 / DSM 4304 / JCM 9628 / NBRC 100126 / VC-16).